Reading from the N-terminus, the 136-residue chain is Protein PsiE (136 aa).

Helical transmembrane passes span 15–35 (ILQTVLNLGLLCLGLILVVFL), 55–75 (YELVEGLVVYFLYFEFIALIV), 82–102 (FHFPLRYFVYIGITAIVRLII), and 108–128 (PLDVLIYSAAILLLVITLWLC).

It belongs to the PsiE family.

The protein localises to the cell inner membrane. This Escherichia coli (strain UTI89 / UPEC) protein is Protein PsiE.